The primary structure comprises 97 residues: Putative septation protein SpoVG (97 aa).

The protein belongs to the SpoVG family.

Functionally, essential for sporulation. Interferes with or is a negative regulator of the pathway leading to asymmetric septation. The sequence is that of Putative septation protein SpoVG from Bacillus velezensis (strain DSM 23117 / BGSC 10A6 / LMG 26770 / FZB42) (Bacillus amyloliquefaciens subsp. plantarum).